A 468-amino-acid polypeptide reads, in one-letter code: 6-phosphogluconate dehydrogenase, decarboxylating (468 aa).

NADP(+) is bound by residues 10 to 15 (GMAVMG), 33 to 35 (NRS), 74 to 76 (VKA), and N102. Residues N102 and 128–130 (SGG) each bind substrate. The Proton acceptor role is filled by K183. 186–187 (HN) provides a ligand contact to substrate. The active-site Proton donor is the E190. Substrate contacts are provided by Y191, K260, R287, R445, and H451.

Belongs to the 6-phosphogluconate dehydrogenase family. Homodimer.

It carries out the reaction 6-phospho-D-gluconate + NADP(+) = D-ribulose 5-phosphate + CO2 + NADPH. It functions in the pathway carbohydrate degradation; pentose phosphate pathway; D-ribulose 5-phosphate from D-glucose 6-phosphate (oxidative stage): step 3/3. Functionally, catalyzes the oxidative decarboxylation of 6-phosphogluconate to ribulose 5-phosphate and CO(2), with concomitant reduction of NADP to NADPH. The protein is 6-phosphogluconate dehydrogenase, decarboxylating (gnd) of Salmonella typhimurium (strain LT2 / SGSC1412 / ATCC 700720).